The primary structure comprises 437 residues: GTPase Obg (437 aa).

Residues 2-160 form the Obg domain; that stretch reads SMFLDTAKIS…RQLELELKIL (159 aa). Residues 161–338 enclose the OBG-type G domain; that stretch reads ADVGLVGFPS…LLEATAELLA (178 aa). Residues 167–174, 192–196, 214–217, 284–287, and 319–321 each bind GTP; these read GFPSVGKS, FTTIV, DLPG, NKMD, and SSL. Mg(2+) is bound by residues S174 and T194. In terms of domain architecture, OCT spans 359-437; it reads GFAETEKNFE…IGKFEFEFVD (79 aa).

This sequence belongs to the TRAFAC class OBG-HflX-like GTPase superfamily. OBG GTPase family. Monomer. Mg(2+) is required as a cofactor.

The protein resides in the cytoplasm. Its function is as follows. An essential GTPase which binds GTP, GDP and possibly (p)ppGpp with moderate affinity, with high nucleotide exchange rates and a fairly low GTP hydrolysis rate. Plays a role in control of the cell cycle, stress response, ribosome biogenesis and in those bacteria that undergo differentiation, in morphogenesis control. This Streptococcus pyogenes serotype M49 (strain NZ131) protein is GTPase Obg.